Consider the following 235-residue polypeptide: TVP38/TMEM64 family inner membrane protein YdjZ (235 aa).

Topologically, residues 1 to 13 are periplasmic; sequence MMMMQSRKIWYYR. Residues 14–34 form a helical membrane-spanning segment; sequence ITLIILLFAMLLAWALLPGVH. Residues 35 to 64 are Cytoplasmic-facing; it reads EFINRSVAAFAAVDQQGIERFIQSYGALAA. Residues 65–85 traverse the membrane as a helical segment; sequence VVSFLLMILQAIAAPLPAFLI. Residues 86 to 95 lie on the Periplasmic side of the membrane; that stretch reads TFANASLFGA. Residues 90–199 form a VTT domain region; it reads ASLFGAFWGG…IVYSWAGSML (110 aa). Residues 96–116 traverse the membrane as a helical segment; it reads FWGGLLSWTSSMAGAALCFFI. The Cytoplasmic segment spans residues 117–176; the sequence is ARVMGREVVEKLTGKTVLDSMDGFFTRYGKHTILVCRLLPFVPFDPISYAAGLTSIRFRS. A helical transmembrane segment spans residues 177–197; sequence FFIATGLGQLPATIVYSWAGS. The Periplasmic segment spans residues 198–202; it reads MLTGG. The chain crosses the membrane as a helical span at residues 203-223; the sequence is TFWFVTGLFILFALTVVIFMA. Residues 224–235 lie on the Cytoplasmic side of the membrane; that stretch reads KKIWLERQKRNA.

The protein belongs to the TVP38/TMEM64 family.

The protein localises to the cell inner membrane. This is TVP38/TMEM64 family inner membrane protein YdjZ (ydjZ) from Escherichia coli (strain K12).